Here is a 279-residue protein sequence, read N- to C-terminus: MKENKKTQFPINKTLSKINKKFLELKKSDKLALMPFIMAGDPNIETTSEILLKLQEKGADLIELGIPYSDPLADGPIIQLSASRALKSGTTLKNVIQLLESLKDKLHIPIILFTYFNPVLNFGLENFCELASKVGVSGLIIPDLPLEEAYKFSEIISSYSIDLILLVAPTTPSERMKIISNNTKGFTYLVSVTGVTGERNKMENRVENLITKLQEISINPVAVGFGISSPEHVNKVRKWGADGVIIGSAFVKRISNSNEKEVVNQIGKFCEEMRKAADQ.

Active-site proton acceptor residues include glutamate 63 and aspartate 74.

It belongs to the TrpA family. In terms of assembly, tetramer of two alpha and two beta chains.

It carries out the reaction (1S,2R)-1-C-(indol-3-yl)glycerol 3-phosphate + L-serine = D-glyceraldehyde 3-phosphate + L-tryptophan + H2O. The protein operates within amino-acid biosynthesis; L-tryptophan biosynthesis; L-tryptophan from chorismate: step 5/5. Functionally, the alpha subunit is responsible for the aldol cleavage of indoleglycerol phosphate to indole and glyceraldehyde 3-phosphate. In Prochlorococcus marinus subsp. pastoris (strain CCMP1986 / NIES-2087 / MED4), this protein is Tryptophan synthase alpha chain.